A 530-amino-acid polypeptide reads, in one-letter code: Membrane protein insertase YidC (530 aa).

The next 4 helical transmembrane spans lie at 5–25 (VVIA…MFPP), 348–368 (YGLA…PLTH), 418–438 (LPML…MFSI), and 492–512 (PVVF…YWLI).

Belongs to the OXA1/ALB3/YidC family. Type 1 subfamily. Interacts with the Sec translocase complex via SecD. Specifically interacts with transmembrane segments of nascent integral membrane proteins during membrane integration.

It is found in the cell inner membrane. Required for the insertion and/or proper folding and/or complex formation of integral membrane proteins into the membrane. Involved in integration of membrane proteins that insert both dependently and independently of the Sec translocase complex, as well as at least some lipoproteins. Aids folding of multispanning membrane proteins. This is Membrane protein insertase YidC from Geotalea daltonii (strain DSM 22248 / JCM 15807 / FRC-32) (Geobacter daltonii).